The primary structure comprises 187 residues: UPF0301 protein Clim_0777 (187 aa).

Belongs to the UPF0301 (AlgH) family.

This is UPF0301 protein Clim_0777 from Chlorobium limicola (strain DSM 245 / NBRC 103803 / 6330).